The sequence spans 457 residues: MITREFDTIAAISTPLGEGAIGIVRLSGTDSFAIAQKIFKGKNLSEVESHTLNYGHIVDPQNQEILDEVMLGAMRSPKTFTREDIIEINTHGGIAVTNEILQLAIREGARMAEPGEFTKRAFLNGRVDLTQAEAVMDIIRAKTDKAMNNAVKQLDGSLSNLINNTRQEILNTLAQVEVNIDYPEYDDVEEMTTQLMREKTAEFEALLSNLLNTARRGKILREGISTAIIGRPNVGKSSLLNNLLREDKAIVTDIEGTTRDVIEEYVNIKGLPLKLIDTAGIRETDDLVEQIGVERSKKALQEADLVLLVLNASEPLTDQDRQLLEISKDSNRIVLLNKTDLEEKIELDLLPTDVIKISVLHNQNIDKIEERINQLFFENAGIVEQDATYLSNARHISLIEKALESLQAVNQGLEMGMPVDLLQVDMTRTWEILGEITGDAAPDELITQLFSQFCLGK.

(6S)-5-formyl-5,6,7,8-tetrahydrofolate contacts are provided by Arg-25, Glu-87, and Arg-126. In terms of domain architecture, TrmE-type G spans 223–377 (GISTAIIGRP…IEERINQLFF (155 aa)). Asn-233 is a binding site for K(+). GTP-binding positions include 233-238 (NVGKSS), 252-258 (TDIEGTT), and 277-280 (DTAG). Residue Ser-237 participates in Mg(2+) binding. K(+) contacts are provided by Thr-252, Ile-254, and Thr-257. Thr-258 lines the Mg(2+) pocket. Residue Lys-457 participates in (6S)-5-formyl-5,6,7,8-tetrahydrofolate binding.

It belongs to the TRAFAC class TrmE-Era-EngA-EngB-Septin-like GTPase superfamily. TrmE GTPase family. Homodimer. Heterotetramer of two MnmE and two MnmG subunits. K(+) serves as cofactor.

It localises to the cytoplasm. Exhibits a very high intrinsic GTPase hydrolysis rate. Involved in the addition of a carboxymethylaminomethyl (cmnm) group at the wobble position (U34) of certain tRNAs, forming tRNA-cmnm(5)s(2)U34. This Streptococcus sanguinis (strain SK36) protein is tRNA modification GTPase MnmE.